Reading from the N-terminus, the 352-residue chain is Ribosomal RNA large subunit methyltransferase M (352 aa).

Residues Ser184, Ala217–Gly220, Asp236, Asp256, and Asp272 contribute to the S-adenosyl-L-methionine site. Lys301 functions as the Proton acceptor in the catalytic mechanism.

This sequence belongs to the class I-like SAM-binding methyltransferase superfamily. RNA methyltransferase RlmE family. RlmM subfamily. Monomer.

It localises to the cytoplasm. The enzyme catalyses cytidine(2498) in 23S rRNA + S-adenosyl-L-methionine = 2'-O-methylcytidine(2498) in 23S rRNA + S-adenosyl-L-homocysteine + H(+). In terms of biological role, catalyzes the 2'-O-methylation at nucleotide C2498 in 23S rRNA. The polypeptide is Ribosomal RNA large subunit methyltransferase M (Pseudomonas paraeruginosa (strain DSM 24068 / PA7) (Pseudomonas aeruginosa (strain PA7))).